The following is a 165-amino-acid chain: uncharacterized protein (165 aa).

Residues 51–102 form a disordered region; that stretch reads KQAAVEPGARGGERPTGSQAGVTDTPDSAPFQRRSRAPRAREQAAQAGLNQK. Residues 66-76 show a composition bias toward polar residues; that stretch reads TGSQAGVTDTP.

This is an uncharacterized protein from Mus musculus (Mouse).